The sequence spans 331 residues: Protein C10 (331 aa).

The protein belongs to the poxviridae C4/C10 protein family.

This is Protein C10 from Vaccinia virus (strain Western Reserve) (VACV).